A 296-amino-acid chain; its full sequence is Stanniocalcin-2 (296 aa).

A signal peptide spans 1 to 24; sequence MCAERLGQFVTLALVFATLDPARG. The interval 22-44 is disordered; sequence ARGTDSTNPPEGPQDRGSQQKGR. An N-linked (GlcNAc...) asparagine glycan is attached at Asn-73. The tract at residues 236–296 is disordered; the sequence is RPYHRDTDHH…EQSEYSDIRR (61 aa). Over residues 238-258 the composition is skewed to basic and acidic residues; that stretch reads YHRDTDHHLTANRGAKGERGS.

It belongs to the stanniocalcin family. In terms of assembly, homodimer; disulfide-linked. In terms of tissue distribution, expressed in a variety of tissues. Strongly expressed in ovary and to a lesser extent in kidney.

Its subcellular location is the secreted. Functionally, has an anti-hypocalcemic action on calcium and phosphate homeostasis. This is Stanniocalcin-2 (Stc2) from Rattus norvegicus (Rat).